Consider the following 1502-residue polypeptide: tRNA (32-2'-O)-methyltransferase regulator trm732 (1502 aa).

It belongs to the THADA family.

Its subcellular location is the cytoplasm. The protein localises to the nucleus. Its function is as follows. Together with methyltransferase trm7, methylates the 2'-O-ribose of nucleotides at position 32 of the anticodon loop of substrate tRNAs. The polypeptide is tRNA (32-2'-O)-methyltransferase regulator trm732 (Schizosaccharomyces pombe (strain 972 / ATCC 24843) (Fission yeast)).